The following is a 479-amino-acid chain: Adenosylhomocysteinase (479 aa).

Residues threonine 66, aspartate 142, and glutamate 203 each contribute to the substrate site. 204 to 206 contributes to the NAD(+) binding site; the sequence is TTT. Residues lysine 233 and aspartate 237 each coordinate substrate. Residues asparagine 238, 267 to 272, glutamate 290, asparagine 325, 346 to 348, and asparagine 394 each bind NAD(+); these read GYGDVG and IGH.

Belongs to the adenosylhomocysteinase family. NAD(+) serves as cofactor.

It is found in the cytoplasm. The enzyme catalyses S-adenosyl-L-homocysteine + H2O = L-homocysteine + adenosine. It functions in the pathway amino-acid biosynthesis; L-homocysteine biosynthesis; L-homocysteine from S-adenosyl-L-homocysteine: step 1/1. Functionally, may play a key role in the regulation of the intracellular concentration of adenosylhomocysteine. This chain is Adenosylhomocysteinase, found in Nitratidesulfovibrio vulgaris (strain DSM 19637 / Miyazaki F) (Desulfovibrio vulgaris).